A 651-amino-acid polypeptide reads, in one-letter code: Far upstream element-binding protein 1 (651 aa).

2 disordered regions span residues 1–24 (MADY…GVVN) and 40–92 (KIGG…HQQQ). Ala2 is modified (N-acetylalanine). Phosphoserine occurs at positions 48 and 51. The span at 61–73 (RPLEDGDQPDAKK) shows a compositional bias: basic and acidic residues. 3 consecutive KH domains span residues 96-160 (VMTE…KRLL), 181-247 (NAVQ…KEMV), and 271-335 (NEGI…AEII). Ser136 bears the Phosphoserine mark. Thr149 is modified (phosphothreonine). Arg317, Arg355, Arg357, and Arg359 each carry omega-N-methylarginine. The KH 4 domain occupies 372 to 439 (LQEFNFIVPT…QQIDYARQLI (68 aa)). Position 411 is a phosphoserine (Ser411). Thr428 is modified (phosphothreonine). Disordered regions lie at residues 443–528 (IGGP…GADP), 545–574 (AQPP…APAG), and 625–651 (TSPQ…HHLY). Pro residues predominate over residues 464-501 (PHGPPGPPGPGTPMGPYNPAPYNPGPPGPAPHGPPAPY). Low complexity-rich tracts occupy residues 514–528 (QQQA…GADP) and 552–574 (PAGA…APAG). Ser626 is subject to Phosphoserine.

Found in a complex with PUF60 and far upstream element (FUSE) DNA segment. Interacts with PUF60 and JTV1. Post-translationally, ubiquitinated. This targets the protein for proteasome-mediated degradation.

The protein localises to the nucleus. In terms of biological role, regulates MYC expression by binding to a single-stranded far-upstream element (FUSE) upstream of the MYC promoter. May act both as activator and repressor of transcription. This chain is Far upstream element-binding protein 1 (Fubp1), found in Mus musculus (Mouse).